The following is a 311-amino-acid chain: MNAPASPAASPSQRARKPDWIRVKAPTSPGYAETRKLMRELNLHTVCEEAACPNIGECWTKKHATVMILGDTCTRACAFCNVKTGMPRPVDLLEPEHTAIAAAKMGLSHIVITSVDRDDLPDGGASQFVKVINALRRETPQTTIEILTPDFRNKPESAVAAIVDARPDVYNHNLETVPRLYPTIRPGARYYASLRLLESVKRRDPSIFTKSGIMLGLGEERMEVHQVMDDMRSADIDFMTMGQYLQPTPKHAKVIDFVTPQAFDAYAQIARAKGFLQVASSPLTRSSYHAGDDFEHMRAAREAQLARVRAD.

[4Fe-4S] cluster contacts are provided by Cys-47, Cys-52, Cys-58, Cys-73, Cys-77, Cys-80, and Ser-287. Residues 59 to 276 (WTKKHATVMI…AQIARAKGFL (218 aa)) enclose the Radical SAM core domain.

The protein belongs to the radical SAM superfamily. Lipoyl synthase family. Requires [4Fe-4S] cluster as cofactor.

The protein localises to the cytoplasm. The catalysed reaction is [[Fe-S] cluster scaffold protein carrying a second [4Fe-4S](2+) cluster] + N(6)-octanoyl-L-lysyl-[protein] + 2 oxidized [2Fe-2S]-[ferredoxin] + 2 S-adenosyl-L-methionine + 4 H(+) = [[Fe-S] cluster scaffold protein] + N(6)-[(R)-dihydrolipoyl]-L-lysyl-[protein] + 4 Fe(3+) + 2 hydrogen sulfide + 2 5'-deoxyadenosine + 2 L-methionine + 2 reduced [2Fe-2S]-[ferredoxin]. The protein operates within protein modification; protein lipoylation via endogenous pathway; protein N(6)-(lipoyl)lysine from octanoyl-[acyl-carrier-protein]: step 2/2. Its function is as follows. Catalyzes the radical-mediated insertion of two sulfur atoms into the C-6 and C-8 positions of the octanoyl moiety bound to the lipoyl domains of lipoate-dependent enzymes, thereby converting the octanoylated domains into lipoylated derivatives. The polypeptide is Lipoyl synthase (Sphingopyxis alaskensis (strain DSM 13593 / LMG 18877 / RB2256) (Sphingomonas alaskensis)).